The sequence spans 377 residues: Chaperone protein DnaJ (377 aa).

One can recognise a J domain in the interval 5–70; that stretch reads DYYEILGVSK…EKRSAYDQYG (66 aa). Residues 131–209 form a CR-type zinc finger; that stretch reads GVVREICVPT…CRGSGRIERT (79 aa). Cys144, Cys147, Cys161, Cys164, Cys183, Cys186, Cys197, and Cys200 together coordinate Zn(2+). CXXCXGXG motif repeat units lie at residues 144–151, 161–168, 183–190, and 197–204; these read CLQCRGSG, CVTCHGHG, CPSCNGHG, and CNKCRGSG.

Belongs to the DnaJ family. Homodimer. It depends on Zn(2+) as a cofactor.

The protein resides in the cytoplasm. Its function is as follows. Participates actively in the response to hyperosmotic and heat shock by preventing the aggregation of stress-denatured proteins and by disaggregating proteins, also in an autonomous, DnaK-independent fashion. Unfolded proteins bind initially to DnaJ; upon interaction with the DnaJ-bound protein, DnaK hydrolyzes its bound ATP, resulting in the formation of a stable complex. GrpE releases ADP from DnaK; ATP binding to DnaK triggers the release of the substrate protein, thus completing the reaction cycle. Several rounds of ATP-dependent interactions between DnaJ, DnaK and GrpE are required for fully efficient folding. Also involved, together with DnaK and GrpE, in the DNA replication of plasmids through activation of initiation proteins. The polypeptide is Chaperone protein DnaJ (Blochmanniella floridana).